A 227-amino-acid polypeptide reads, in one-letter code: Cytochrome c oxidase subunit 2 (227 aa).

Residues 1–14 (MAYPFQLGLQDATS) are Mitochondrial intermembrane-facing. A helical membrane pass occupies residues 15–45 (PIMEELTNFHDHTLMIVFLISSLVLYIISLM). Topologically, residues 46–59 (LTTKLTHTSTMDAQ) are mitochondrial matrix. A helical membrane pass occupies residues 60–87 (EVETIWTILPAVILILIALPSLRILYMM). At 88 to 227 (DEINNPALTV…YFENWSASMI (140 aa)) the chain is on the mitochondrial intermembrane side. The Cu cation site is built by His-161, Cys-196, Glu-198, Cys-200, His-204, and Met-207. A Mg(2+)-binding site is contributed by Glu-198. Tyr-218 is subject to Phosphotyrosine.

The protein belongs to the cytochrome c oxidase subunit 2 family. Component of the cytochrome c oxidase (complex IV, CIV), a multisubunit enzyme composed of 14 subunits. The complex is composed of a catalytic core of 3 subunits MT-CO1, MT-CO2 and MT-CO3, encoded in the mitochondrial DNA, and 11 supernumerary subunits COX4I, COX5A, COX5B, COX6A, COX6B, COX6C, COX7A, COX7B, COX7C, COX8 and NDUFA4, which are encoded in the nuclear genome. The complex exists as a monomer or a dimer and forms supercomplexes (SCs) in the inner mitochondrial membrane with NADH-ubiquinone oxidoreductase (complex I, CI) and ubiquinol-cytochrome c oxidoreductase (cytochrome b-c1 complex, complex III, CIII), resulting in different assemblies (supercomplex SCI(1)III(2)IV(1) and megacomplex MCI(2)III(2)IV(2)). Found in a complex with TMEM177, COA6, COX18, COX20, SCO1 and SCO2. Interacts with TMEM177 in a COX20-dependent manner. Interacts with COX20. Interacts with COX16. It depends on Cu cation as a cofactor.

It is found in the mitochondrion inner membrane. It carries out the reaction 4 Fe(II)-[cytochrome c] + O2 + 8 H(+)(in) = 4 Fe(III)-[cytochrome c] + 2 H2O + 4 H(+)(out). In terms of biological role, component of the cytochrome c oxidase, the last enzyme in the mitochondrial electron transport chain which drives oxidative phosphorylation. The respiratory chain contains 3 multisubunit complexes succinate dehydrogenase (complex II, CII), ubiquinol-cytochrome c oxidoreductase (cytochrome b-c1 complex, complex III, CIII) and cytochrome c oxidase (complex IV, CIV), that cooperate to transfer electrons derived from NADH and succinate to molecular oxygen, creating an electrochemical gradient over the inner membrane that drives transmembrane transport and the ATP synthase. Cytochrome c oxidase is the component of the respiratory chain that catalyzes the reduction of oxygen to water. Electrons originating from reduced cytochrome c in the intermembrane space (IMS) are transferred via the dinuclear copper A center (CU(A)) of subunit 2 and heme A of subunit 1 to the active site in subunit 1, a binuclear center (BNC) formed by heme A3 and copper B (CU(B)). The BNC reduces molecular oxygen to 2 water molecules using 4 electrons from cytochrome c in the IMS and 4 protons from the mitochondrial matrix. In Oenomys hypoxanthus (Rufous-nosed rat), this protein is Cytochrome c oxidase subunit 2 (MT-CO2).